Here is a 172-residue protein sequence, read N- to C-terminus: Large ribosomal subunit protein uL10 (172 aa).

It belongs to the universal ribosomal protein uL10 family. Part of the ribosomal stalk of the 50S ribosomal subunit. The N-terminus interacts with L11 and the large rRNA to form the base of the stalk. The C-terminus forms an elongated spine to which L12 dimers bind in a sequential fashion forming a multimeric L10(L12)X complex.

In terms of biological role, forms part of the ribosomal stalk, playing a central role in the interaction of the ribosome with GTP-bound translation factors. This chain is Large ribosomal subunit protein uL10, found in Rhizobium johnstonii (strain DSM 114642 / LMG 32736 / 3841) (Rhizobium leguminosarum bv. viciae).